We begin with the raw amino-acid sequence, 347 residues long: Tryptophan--tRNA ligase (347 aa).

ATP is bound by residues Q10 to S12 and G18 to N19. The 'HIGH' region motif lies at A11–N19. D140 serves as a coordination point for L-tryptophan. ATP is bound by residues G152–D154, I191, and K200–S204. The 'KMSKS' region motif lies at K200–S204.

Belongs to the class-I aminoacyl-tRNA synthetase family. As to quaternary structure, homodimer.

The protein resides in the cytoplasm. The enzyme catalyses tRNA(Trp) + L-tryptophan + ATP = L-tryptophyl-tRNA(Trp) + AMP + diphosphate + H(+). In terms of biological role, catalyzes the attachment of tryptophan to tRNA(Trp). In Mycoplasma genitalium (strain ATCC 33530 / DSM 19775 / NCTC 10195 / G37) (Mycoplasmoides genitalium), this protein is Tryptophan--tRNA ligase.